The sequence spans 180 residues: Shikimate kinase (180 aa).

14–19 serves as a coordination point for ATP; sequence GAGKSS. Residue Ser-18 participates in Mg(2+) binding. Substrate is bound by residues Asp-36, Arg-60, and Gly-82. Arg-120 is a binding site for ATP. Arg-139 provides a ligand contact to substrate.

Belongs to the shikimate kinase family. As to quaternary structure, monomer. It depends on Mg(2+) as a cofactor.

The protein resides in the cytoplasm. The enzyme catalyses shikimate + ATP = 3-phosphoshikimate + ADP + H(+). It functions in the pathway metabolic intermediate biosynthesis; chorismate biosynthesis; chorismate from D-erythrose 4-phosphate and phosphoenolpyruvate: step 5/7. In terms of biological role, catalyzes the specific phosphorylation of the 3-hydroxyl group of shikimic acid using ATP as a cosubstrate. The chain is Shikimate kinase from Xylella fastidiosa (strain 9a5c).